Here is a 376-residue protein sequence, read N- to C-terminus: Cytoplasmic tRNA 2-thiolation protein 1 (376 aa).

This sequence belongs to the TtcA family. CTU1/NCS6/ATPBD3 subfamily.

The protein localises to the cytoplasm. It participates in tRNA modification; 5-methoxycarbonylmethyl-2-thiouridine-tRNA biosynthesis. Its function is as follows. Plays a central role in 2-thiolation of mcm(5)S(2)U at tRNA wobble positions of tRNA(Lys), tRNA(Glu) and tRNA(Gln). Directly binds tRNAs and probably acts by catalyzing adenylation of tRNAs, an intermediate required for 2-thiolation. It is unclear whether it acts as a sulfurtransferase that transfers sulfur from thiocarboxylated URM1 onto the uridine of tRNAs at wobble position. Prior mcm(5) tRNA modification by the elongator complex is required for 2-thiolation. May also be involved in protein urmylation. This chain is Cytoplasmic tRNA 2-thiolation protein 1, found in Scheffersomyces stipitis (strain ATCC 58785 / CBS 6054 / NBRC 10063 / NRRL Y-11545) (Yeast).